Here is a 407-residue protein sequence, read N- to C-terminus: Indoleamine 2,3-dioxygenase 2 (407 aa).

His347 contacts heme.

This sequence belongs to the indoleamine 2,3-dioxygenase family. The cofactor is heme. Detected in liver, small intestine, spleen, placenta, thymus, lung, brain, kidney, and colon. Also expressed at low level in testis and thyroid. Not expressed in the majority of human tumor samples (&gt;99%).

The enzyme catalyses L-tryptophan + O2 = N-formyl-L-kynurenine. It functions in the pathway amino-acid degradation; L-tryptophan degradation via kynurenine pathway; L-kynurenine from L-tryptophan: step 1/2. Its activity is regulated as follows. Activity is inhibited by D-1MT (1-methyl-D-tryptophan) and MTH-trp (methylthiohydantoin-DL-tryptophan) but not L-1MT (1-methyl-L-tryptophan). Its function is as follows. Catalyzes the first and rate limiting step of the catabolism of the essential amino acid tryptophan along the kynurenine pathway. Involved in immune regulation. May not play a significant role in tryptophan-related tumoral resistance. This chain is Indoleamine 2,3-dioxygenase 2, found in Homo sapiens (Human).